A 315-amino-acid chain; its full sequence is Aspartate carbamoyltransferase catalytic subunit (315 aa).

Residues arginine 64 and threonine 65 each contribute to the carbamoyl phosphate site. An L-aspartate-binding site is contributed by lysine 92. Arginine 114, histidine 142, and glutamine 145 together coordinate carbamoyl phosphate. 2 residues coordinate L-aspartate: arginine 175 and arginine 229. Residues glycine 270 and proline 271 each contribute to the carbamoyl phosphate site.

The protein belongs to the aspartate/ornithine carbamoyltransferase superfamily. ATCase family. In terms of assembly, heterododecamer (2C3:3R2) of six catalytic PyrB chains organized as two trimers (C3), and six regulatory PyrI chains organized as three dimers (R2).

The catalysed reaction is carbamoyl phosphate + L-aspartate = N-carbamoyl-L-aspartate + phosphate + H(+). It functions in the pathway pyrimidine metabolism; UMP biosynthesis via de novo pathway; (S)-dihydroorotate from bicarbonate: step 2/3. In terms of biological role, catalyzes the condensation of carbamoyl phosphate and aspartate to form carbamoyl aspartate and inorganic phosphate, the committed step in the de novo pyrimidine nucleotide biosynthesis pathway. The polypeptide is Aspartate carbamoyltransferase catalytic subunit (Methylorubrum populi (strain ATCC BAA-705 / NCIMB 13946 / BJ001) (Methylobacterium populi)).